A 524-amino-acid polypeptide reads, in one-letter code: Keratin, type II cytoskeletal 71 (524 aa).

A head region spans residues M1–Q130. The coil 1A stretch occupies residues E131–L166. Positions E131–M444 constitute an IF rod domain. Residues Q167 to Y185 form a linker 1 region. Residues I186–I277 form a coil 1B region. The segment at Q278–I301 is linker 12. The tract at residues I302–E440 is coil 2. Residues E441–R524 are tail. The segment at V491–R524 is disordered. Positions G494 to L509 are enriched in basic and acidic residues. Positions G510 to R524 are enriched in low complexity.

Belongs to the intermediate filament family. In terms of assembly, heterodimer of a type I and a type II keratin. Associates with KRT16 and/or KRT17.

It is found in the cytoplasm. The protein localises to the cytoskeleton. Its function is as follows. Plays a central role in hair formation. Essential component of keratin intermediate filaments in the inner root sheath (IRS) of the hair follicle. The chain is Keratin, type II cytoskeletal 71 (KRT71) from Felis catus (Cat).